A 461-amino-acid chain; its full sequence is Protein FAM124B (461 aa).

Ser49 is modified (phosphoserine). The interval 302-346 (VELPEPGGRPVSDGSSNTWWKSAGGSAQPSSPATESQPQLSSLHL) is disordered. Residues 323 to 334 (SAGGSAQPSSPA) show a composition bias toward low complexity.

The protein belongs to the FAM124 family. Interacts with CHD7 and CHD8.

The protein resides in the nucleus. The polypeptide is Protein FAM124B (FAM124B) (Bos taurus (Bovine)).